The primary structure comprises 797 residues: Homoaconitase, mitochondrial (797 aa).

A mitochondrion-targeting transit peptide spans 1 to 47; that stretch reads MVARFVPSAMTVLVARRGLAMASTRRGWRGLAVNLKPAAGRQWRQAY. Cys-404, Cys-471, and Cys-474 together coordinate [4Fe-4S] cluster.

Belongs to the aconitase/IPM isomerase family. It depends on [4Fe-4S] cluster as a cofactor.

It is found in the mitochondrion. It carries out the reaction (2R,3S)-homoisocitrate = cis-homoaconitate + H2O. The protein operates within amino-acid biosynthesis; L-lysine biosynthesis via AAA pathway; L-alpha-aminoadipate from 2-oxoglutarate: step 3/5. Its function is as follows. Catalyzes the reversible hydration of cis-homoaconitate to (2R,3S)-homoisocitrate, a step in the alpha-aminoadipate pathway for lysine biosynthesis. The chain is Homoaconitase, mitochondrial (LYS4) from Chaetomium globosum (strain ATCC 6205 / CBS 148.51 / DSM 1962 / NBRC 6347 / NRRL 1970) (Soil fungus).